A 400-amino-acid polypeptide reads, in one-letter code: Multiphosphoryl transfer protein (400 aa).

The region spanning 2–142 (LELTTQDIQL…QQIIAIIKGE (141 aa)) is the PTS EIIA type-2 domain. The active-site Tele-phosphohistidine intermediate; for EIIA activity is the H62. H62 carries the post-translational modification Phosphohistidine; by HPr. The HPr domain maps to 310–400 (AHTATFRIKN…VAINAGLGEG (91 aa)). The Pros-phosphohistidine intermediate; for HPr activity role is filled by H324. Position 324 is a phosphohistidine; by EI (H324).

It is found in the cytoplasm. Functionally, the phosphoenolpyruvate-dependent sugar phosphotransferase system (sugar PTS), a major carbohydrate active transport system, catalyzes the phosphorylation of incoming sugar substrates concomitantly with their translocation across the cell membrane. The enzyme II FruAB PTS system is involved in fructose transport. This Vibrio cholerae serotype O1 (strain ATCC 39315 / El Tor Inaba N16961) protein is Multiphosphoryl transfer protein.